The sequence spans 63 residues: Cytochrome c oxidase subunit 5A, mitochondrial (63 aa).

Belongs to the cytochrome c oxidase subunit 5A family. Component of the cytochrome c oxidase (complex IV, CIV), a multisubunit enzyme composed of a catalytic core of 3 subunits and several supernumerary subunits. The complex exists as a monomer or a dimer and forms supercomplexes (SCs) in the inner mitochondrial membrane with ubiquinol-cytochrome c oxidoreductase (cytochrome b-c1 complex, complex III, CIII).

The protein resides in the mitochondrion inner membrane. It functions in the pathway energy metabolism; oxidative phosphorylation. Component of the cytochrome c oxidase, the last enzyme in the mitochondrial electron transport chain which drives oxidative phosphorylation. The respiratory chain contains 3 multisubunit complexes succinate dehydrogenase (complex II, CII), ubiquinol-cytochrome c oxidoreductase (cytochrome b-c1 complex, complex III, CIII) and cytochrome c oxidase (complex IV, CIV), that cooperate to transfer electrons derived from NADH and succinate to molecular oxygen, creating an electrochemical gradient over the inner membrane that drives transmembrane transport and the ATP synthase. Cytochrome c oxidase is the component of the respiratory chain that catalyzes the reduction of oxygen to water. Electrons originating from reduced cytochrome c in the intermembrane space (IMS) are transferred via the dinuclear copper A center (CU(A)) of subunit 2 and heme A of subunit 1 to the active site in subunit 1, a binuclear center (BNC) formed by heme A3 and copper B (CU(B)). The BNC reduces molecular oxygen to 2 water molecules using 4 electrons from cytochrome c in the IMS and 4 protons from the mitochondrial matrix. The chain is Cytochrome c oxidase subunit 5A, mitochondrial (COVA) from Manduca sexta (Tobacco hawkmoth).